Reading from the N-terminus, the 425-residue chain is Kynureninase (425 aa).

Pyridoxal 5'-phosphate-binding positions include Leu-105, Thr-106, 133–136, Asp-218, His-221, and Tyr-243; that span reads FPSD. Lys-244 carries the post-translational modification N6-(pyridoxal phosphate)lysine. Trp-274 and Asn-302 together coordinate pyridoxal 5'-phosphate.

Belongs to the kynureninase family. As to quaternary structure, homodimer. Pyridoxal 5'-phosphate serves as cofactor.

The enzyme catalyses L-kynurenine + H2O = anthranilate + L-alanine + H(+). It catalyses the reaction 3-hydroxy-L-kynurenine + H2O = 3-hydroxyanthranilate + L-alanine + H(+). It functions in the pathway amino-acid degradation; L-kynurenine degradation; L-alanine and anthranilate from L-kynurenine: step 1/1. The protein operates within cofactor biosynthesis; NAD(+) biosynthesis; quinolinate from L-kynurenine: step 2/3. Its function is as follows. Catalyzes the cleavage of L-kynurenine (L-Kyn) and L-3-hydroxykynurenine (L-3OHKyn) into anthranilic acid (AA) and 3-hydroxyanthranilic acid (3-OHAA), respectively. This is Kynureninase from Flavobacterium johnsoniae (strain ATCC 17061 / DSM 2064 / JCM 8514 / BCRC 14874 / CCUG 350202 / NBRC 14942 / NCIMB 11054 / UW101) (Cytophaga johnsonae).